The sequence spans 130 residues: MSKPSLYLPSKPLKYELKRQIISTDVLIGPVIAISFVILLIIGGVLDVMTDIDSGVIIMLMLTLPLVVPFLLVPVNWIGYWYQGRHYRKRVRDWKAQCKKIKKEHQLKLAEYEFNEIMKFVKESRCKSQS.

This is an uncharacterized protein from Enterobacteria phage T4 (Bacteriophage T4).